The sequence spans 340 residues: Pesticidal crystal protein Cry15Aa (340 aa).

The interval 318-340 (RDYDKEHICHDQAEKYERDYDKE) is disordered.

Promotes colloidosmotic lysis by binding to the midgut epithelial cells of lepidopteran larvae. The sequence is that of Pesticidal crystal protein Cry15Aa (cry15Aa) from Bacillus thuringiensis subsp. thompsoni.